The following is a 468-amino-acid chain: MAVANDYIVKDIGLADYGRKEISIAETEMPGLMSTRAEYGASQPLKGAKIAGSLHMTIQTAVLIETLKALGADIRWVSCNIYSTQDHAAAAIAAAGIPVFAVKGETLTEYWDYTSKLFDWHDGGMPNMILDDGGDATMFVHLGLRAENGDTAFLDKPESEEEEVFFALLKKKLAEKPKGWFAGLADSIKGVSEETTTGVHRLYNLAKEGKLLFPAINVNDSVTKSKFDNLYGCKESLVDGIRRGTDVMMAGKVAMVAGFGDVGKGSAASLRNAGCRVLVSEIDPICALQAAMEGYEVVTMEDAAPRADIFVTATGNKDIITIEHMRAMKDRAIVCNIGHFDNEIQVAGLKNLKWQNIKPQVDEIEFADGHRIILLSEGRLVNLGNATGHPSFVMSASFTNQTLAQIELWTNPGKYERQVYTLPKALDEKVAALHLEKIGVKLSKLRPDQAAYIGVSQTGPFKPEHYRY.

The substrate site is built by Thr57, Asp132, and Glu194. 195–197 (TTT) contacts NAD(+). Positions 224 and 228 each coordinate substrate. NAD(+) contacts are provided by residues Asn229, 258-263 (GFGDVG), Glu281, Asn316, 337-339 (IGH), and Asn382.

Belongs to the adenosylhomocysteinase family. NAD(+) serves as cofactor.

It localises to the cytoplasm. The catalysed reaction is S-adenosyl-L-homocysteine + H2O = L-homocysteine + adenosine. It participates in amino-acid biosynthesis; L-homocysteine biosynthesis; L-homocysteine from S-adenosyl-L-homocysteine: step 1/1. Functionally, may play a key role in the regulation of the intracellular concentration of adenosylhomocysteine. The sequence is that of Adenosylhomocysteinase from Methylorubrum extorquens (strain CM4 / NCIMB 13688) (Methylobacterium extorquens).